A 671-amino-acid polypeptide reads, in one-letter code: Zinc finger and BTB domain-containing protein 16-A (671 aa).

In terms of domain architecture, BTB spans 34 to 96 (CDVVIMVDSQ…AYTATLQAKV (63 aa)). Disordered stretches follow at residues 130–167 (ENDT…TEES) and 248–289 (VDES…RSSV). The segment covering 270–279 (RSGEPDKNRD) has biased composition (basic and acidic residues). Position 283 is a phosphothreonine (Thr-283). 9 C2H2-type zinc fingers span residues 401–423 (ERCN…RKLH), 429–451 (YGCE…LLSH), 458–480 (IVCD…RQIH), 487–509 (IFCL…MEVH), 515–537 (YICS…LRSH), 544–566 (FECE…KRIH), 572–594 (YECN…YRVH), 600–622 (FECK…LRTH), and 628–650 (YQCT…MKGH).

It belongs to the krueppel C2H2-type zinc-finger protein family. Interacts with btbd6a (via BTB domain). Post-translationally, polyubiquitinated, leading to its proteasomal degradation. In terms of tissue distribution, during early stages of primary neurogenesis, expressed in the neural epithelium, with highest levels in the forebrain and midbrain. Also expressed in a posterior-to-anterior gradient in the caudal neural plate at the 3-6 somite stage.

Its subcellular location is the nucleus. The protein resides in the cytoplasm. The protein operates within protein modification; protein ubiquitination. In terms of biological role, probable transcription factor. Probable substrate-recognition component of an E3 ubiquitin-protein ligase complex which mediates the ubiquitination and subsequent proteasomal degradation of target proteins. Inhibits neurogenesis. The protein is Zinc finger and BTB domain-containing protein 16-A of Danio rerio (Zebrafish).